Consider the following 258-residue polypeptide: Phosphate import ATP-binding protein PstB (258 aa).

The region spanning 5–247 (IDVSGLTAYY…ERIFSNPSVQ (243 aa)) is the ABC transporter domain. 37 to 44 (GPSGCGKS) provides a ligand contact to ATP.

The protein belongs to the ABC transporter superfamily. Phosphate importer (TC 3.A.1.7) family. As to quaternary structure, the complex is composed of two ATP-binding proteins (PstB), two transmembrane proteins (PstC and PstA) and a solute-binding protein (PstS).

Its subcellular location is the cell membrane. The enzyme catalyses phosphate(out) + ATP + H2O = ADP + 2 phosphate(in) + H(+). Part of the ABC transporter complex PstSACB involved in phosphate import. Responsible for energy coupling to the transport system. This Streptomyces avermitilis (strain ATCC 31267 / DSM 46492 / JCM 5070 / NBRC 14893 / NCIMB 12804 / NRRL 8165 / MA-4680) protein is Phosphate import ATP-binding protein PstB.